Here is a 132-residue protein sequence, read N- to C-terminus: Small ribosomal subunit protein uS8 (132 aa).

It belongs to the universal ribosomal protein uS8 family. As to quaternary structure, part of the 30S ribosomal subunit. Contacts proteins S5 and S12.

Its function is as follows. One of the primary rRNA binding proteins, it binds directly to 16S rRNA central domain where it helps coordinate assembly of the platform of the 30S subunit. This is Small ribosomal subunit protein uS8 from Bartonella henselae (strain ATCC 49882 / DSM 28221 / CCUG 30454 / Houston 1) (Rochalimaea henselae).